Here is a 425-residue protein sequence, read N- to C-terminus: UDP-N-acetylglucosamine 1-carboxyvinyltransferase (425 aa).

23–24 (KN) contributes to the phosphoenolpyruvate binding site. UDP-N-acetyl-alpha-D-glucosamine is bound at residue arginine 100. Cysteine 124 (proton donor) is an active-site residue. Cysteine 124 carries the 2-(S-cysteinyl)pyruvic acid O-phosphothioketal modification. UDP-N-acetyl-alpha-D-glucosamine-binding positions include 169 to 172 (KVSV), aspartate 313, and valine 335.

The protein belongs to the EPSP synthase family. MurA subfamily.

It is found in the cytoplasm. It catalyses the reaction phosphoenolpyruvate + UDP-N-acetyl-alpha-D-glucosamine = UDP-N-acetyl-3-O-(1-carboxyvinyl)-alpha-D-glucosamine + phosphate. It functions in the pathway cell wall biogenesis; peptidoglycan biosynthesis. Cell wall formation. Adds enolpyruvyl to UDP-N-acetylglucosamine. This is UDP-N-acetylglucosamine 1-carboxyvinyltransferase from Wolbachia pipientis subsp. Culex pipiens (strain wPip).